We begin with the raw amino-acid sequence, 124 residues long: Small ribosomal subunit protein uS12 (124 aa).

3-methylthioaspartic acid is present on Asp-89. Residues 105–124 (QGVKNRKQARSRYGAKKEKS) form a disordered region. Residues 108-118 (KNRKQARSRYG) show a composition bias toward basic residues.

The protein belongs to the universal ribosomal protein uS12 family. In terms of assembly, part of the 30S ribosomal subunit. Contacts proteins S8 and S17. May interact with IF1 in the 30S initiation complex.

In terms of biological role, with S4 and S5 plays an important role in translational accuracy. Functionally, interacts with and stabilizes bases of the 16S rRNA that are involved in tRNA selection in the A site and with the mRNA backbone. Located at the interface of the 30S and 50S subunits, it traverses the body of the 30S subunit contacting proteins on the other side and probably holding the rRNA structure together. The combined cluster of proteins S8, S12 and S17 appears to hold together the shoulder and platform of the 30S subunit. The sequence is that of Small ribosomal subunit protein uS12 from Mycobacterium leprae (strain Br4923).